A 655-amino-acid polypeptide reads, in one-letter code: D-xylonate dehydratase YagF (655 aa).

Belongs to the IlvD/Edd family.

It catalyses the reaction D-xylonate = 2-dehydro-3-deoxy-D-arabinonate + H2O. Functionally, catalyzes the dehydration of D-xylonic acid to form 2-dehydro-3-deoxy-D-pentonate. The sequence is that of D-xylonate dehydratase YagF (yagF) from Escherichia coli (strain K12).